A 205-amino-acid chain; its full sequence is 7-methyl-GTP pyrophosphatase (205 aa).

Residue D79 is the Proton acceptor of the active site.

Belongs to the Maf family. YceF subfamily. A divalent metal cation is required as a cofactor.

Its subcellular location is the cytoplasm. It catalyses the reaction N(7)-methyl-GTP + H2O = N(7)-methyl-GMP + diphosphate + H(+). Its function is as follows. Nucleoside triphosphate pyrophosphatase that hydrolyzes 7-methyl-GTP (m(7)GTP). May have a dual role in cell division arrest and in preventing the incorporation of modified nucleotides into cellular nucleic acids. The chain is 7-methyl-GTP pyrophosphatase from Paraburkholderia xenovorans (strain LB400).